The primary structure comprises 635 residues: Leucine aminopeptidase 2-2 (635 aa).

Substrate contacts are provided by residues 141–143 (QCQ) and 265–270 (PYGGME). His-294 contributes to the Zn(2+) binding site. Glu-295 acts as the Proton acceptor in catalysis. Zn(2+)-binding residues include His-298 and Glu-317. Catalysis depends on Tyr-399, which acts as the Proton donor.

It belongs to the peptidase M1 family. Requires Zn(2+) as cofactor.

It is found in the cytoplasm. It localises to the nucleus. The enzyme catalyses an epoxide + H2O = an ethanediol. Aminopeptidase that preferentially cleaves di- and tripeptides. Also has low epoxide hydrolase activity (in vitro). Can hydrolyze the epoxide leukotriene LTA(4) but it forms preferentially 5,6-dihydroxy-7,9,11,14-eicosatetraenoic acid rather than the cytokine leukotriene B(4) as the product compared to the homologous mammalian enzyme (in vitro). This is Leucine aminopeptidase 2-2 (LTA4) from Scheffersomyces stipitis (strain ATCC 58785 / CBS 6054 / NBRC 10063 / NRRL Y-11545) (Yeast).